The chain runs to 1536 residues: Tyrosine-protein kinase BAZ1B (1536 aa).

One can recognise a WAC domain in the interval 25 to 130 (EVYTIEHTKE…GEKCDLMVGN (106 aa)). Disordered stretches follow at residues 144–207 (LENP…TTMK), 304–470 (PSTK…GKPF), and 557–579 (LREK…SRRY). Composition is skewed to basic and acidic residues over residues 151–196 (NAEK…DRAR) and 334–343 (AKGDKKKNKD). Positions 344–355 (SQNIPLSPTIWS) are enriched in polar residues. Residues 392–401 (KQGDKKSSDP) are compositionally biased toward basic and acidic residues. The segment covering 443 to 452 (AKSPAAAGSP) has biased composition (low complexity). Residues 515-583 (EELKELVQKR…EMSRRYEDQE (69 aa)) adopt a coiled-coil conformation. The DDT domain maps to 603-667 (NTIFGDVAMV…LQTLLQDELA (65 aa)). 2 coiled-coil regions span residues 768-803 (HQKS…METK) and 850-890 (IQAK…FQDA). Over residues 785 to 832 (ANDRKRAEKQKRKEQMETKTDGDVLIKAEKKKESTVKKETPKVLPKEE) the composition is skewed to basic and acidic residues. The interval 785 to 839 (ANDRKRAEKQKRKEQMETKTDGDVLIKAEKKKESTVKKETPKVLPKEEPEPEDMI) is disordered. Positions 940–973 (PPEEEPVLTEEEEEEEEVKKEEETEDGEKEDEGS) are disordered. Composition is skewed to acidic residues over residues 941–955 (PEEE…EEEE) and 962–972 (ETEDGEKEDEG). A PHD-type zinc finger spans residues 1202–1252 (NARCKVCRRKGEDDKLILCDECNKAFHLFCLRPALYRIPAGEWLCPACQPT). 2 disordered regions span residues 1256–1371 (RSSR…KDVE) and 1477–1536 (LRRR…TKQK). Residues 1261 to 1293 (RNYKEDSEEEEDSEEEDEEESEEEDSEEEHRNT) adopt a coiled-coil conformation. Positions 1266–1287 (DSEEEEDSEEEDEEESEEEDSE) are enriched in acidic residues. A compositionally biased stretch (basic residues) spans 1297–1316 (LRSRKKVKTSSKSKMQKKPA). A compositionally biased stretch (low complexity) spans 1325 to 1350 (KTDTNPSKTSPKSSAKPKSRAAPSSP). Residue serine 1349 is modified to Phosphoserine. One can recognise a Bromo domain in the interval 1366 to 1470 (RKKDVELQKC…EAFVELLQKS (105 aa)). Over residues 1491–1502 (NSDDDDDDEEED) the composition is skewed to acidic residues. Basic residues predominate over residues 1506–1524 (KKQKNGKQGKKASSKRKVE). Positions 1525–1536 (HSRTEKYQTKQK) are enriched in basic and acidic residues.

It belongs to the WAL family. BAZ1B subfamily. Interacts with smarca5/snf2h; the interaction is direct and forms the WICH complex. Component of the B-WICH complex. Mn(2+) is required as a cofactor.

Its subcellular location is the nucleus. The catalysed reaction is L-tyrosyl-[protein] + ATP = O-phospho-L-tyrosyl-[protein] + ADP + H(+). Atypical tyrosine-protein kinase that plays a central role in chromatin remodeling and acts as a transcription regulator. Involved in DNA damage response by phosphorylating 'Tyr-142' of histone H2AX (H2AXY142ph). H2AXY142ph plays a central role in DNA repair and acts as a mark that distinguishes between apoptotic and repair responses to genotoxic stress. Essential component of the WICH complex, a chromatin remodeling complex that mobilizes nucleosomes and reconfigures irregular chromatin to a regular nucleosomal array structure. The WICH complex regulates the transcription of various genes, has a role in RNA polymerase I and RNA polymerase III transcription, mediates the histone H2AX phosphorylation at 'Tyr-142', and is involved in the maintenance of chromatin structures during DNA replication processes. The sequence is that of Tyrosine-protein kinase BAZ1B (baz1b) from Danio rerio (Zebrafish).